Consider the following 41-residue polypeptide: Large ribosomal subunit protein bL36 (41 aa).

The protein belongs to the bacterial ribosomal protein bL36 family.

In Bartonella quintana (strain Toulouse) (Rochalimaea quintana), this protein is Large ribosomal subunit protein bL36.